The following is a 292-amino-acid chain: Elongation factor Ts (292 aa).

The involved in Mg(2+) ion dislocation from EF-Tu stretch occupies residues 79-82 (TDFV).

The protein belongs to the EF-Ts family.

The protein resides in the cytoplasm. In terms of biological role, associates with the EF-Tu.GDP complex and induces the exchange of GDP to GTP. It remains bound to the aminoacyl-tRNA.EF-Tu.GTP complex up to the GTP hydrolysis stage on the ribosome. This Metamycoplasma arthritidis (strain 158L3-1) (Mycoplasma arthritidis) protein is Elongation factor Ts.